The chain runs to 480 residues: Coronin-2B (480 aa).

WD repeat units lie at residues 29-77, 78-127, 128-170, 171-212, 213-259, 260-305, and 306-345; these read HCFD…GRIE, PNYP…RNMT, EALL…LDVG, EPVK…PRSG, RVLQ…EDLS, MPLI…TEKP, and YLSY…KLVT. The stretch at 436–479 forms a coiled coil; that stretch reads NELLRMFFRQQDEIRRLKEELAQKDIRIRQLQLELKNLRNSPKN.

Belongs to the WD repeat coronin family. As to quaternary structure, binds to F-actin and to vinculin. In terms of tissue distribution, expressed predominantly in brain.

The protein localises to the cytoplasm. It is found in the cytoskeleton. May play a role in the reorganization of neuronal actin structure. This is Coronin-2B (CORO2B) from Homo sapiens (Human).